The following is a 199-amino-acid chain: uncharacterized protein (199 aa).

The next 3 membrane-spanning stretches (helical) occupy residues 22–44 (VVVV…YLFL), 65–87 (TGFI…HLAL), and 91–108 (HTIT…FFFW).

The protein belongs to the ycf1 family.

The protein resides in the mitochondrion membrane. This is an uncharacterized protein from Arabidopsis thaliana (Mouse-ear cress).